The sequence spans 541 residues: Malate synthase (541 aa).

Residue arginine 169 is the Proton acceptor of the active site. Aspartate 454 acts as the Proton donor in catalysis.

The protein belongs to the malate synthase family.

The protein resides in the cytoplasm. It carries out the reaction glyoxylate + acetyl-CoA + H2O = (S)-malate + CoA + H(+). Its pathway is carbohydrate metabolism; glyoxylate cycle; (S)-malate from isocitrate: step 2/2. The sequence is that of Malate synthase (aceB) from Streptomyces clavuligerus.